Here is a 298-residue protein sequence, read N- to C-terminus: Dihydrodipicolinate reductase-like protein CRR1, chloroplastic (298 aa).

A chloroplast-targeting transit peptide spans M1 to S25. A160–L163 is an NAD(+) binding site.

It belongs to the DapB family. Expressed specifically in leaves.

It localises to the plastid. The protein resides in the chloroplast stroma. Its function is as follows. Dihydrodipicolinate reductase (DHPR)-like protein that may not function as DHPR in lysine biosynthesis. Required for both formation and activity of the chloroplast NAD(P)H dehydrogenase (NDH) complex of the photosynthetic electron transport chain. May function in assembly or stabilization of the NDH complex. This Arabidopsis thaliana (Mouse-ear cress) protein is Dihydrodipicolinate reductase-like protein CRR1, chloroplastic.